A 175-amino-acid chain; its full sequence is Adenine phosphoribosyltransferase (175 aa).

Belongs to the purine/pyrimidine phosphoribosyltransferase family. Homodimer.

The protein resides in the cytoplasm. It catalyses the reaction AMP + diphosphate = 5-phospho-alpha-D-ribose 1-diphosphate + adenine. It participates in purine metabolism; AMP biosynthesis via salvage pathway; AMP from adenine: step 1/1. Functionally, catalyzes a salvage reaction resulting in the formation of AMP, that is energically less costly than de novo synthesis. The chain is Adenine phosphoribosyltransferase from Thermosipho melanesiensis (strain DSM 12029 / CIP 104789 / BI429).